The primary structure comprises 130 residues: Holo-[acyl-carrier-protein] synthase (130 aa).

Residues Asp-8 and Glu-62 each coordinate Mg(2+).

It belongs to the P-Pant transferase superfamily. AcpS family. Requires Mg(2+) as cofactor.

It localises to the cytoplasm. It carries out the reaction apo-[ACP] + CoA = holo-[ACP] + adenosine 3',5'-bisphosphate + H(+). In terms of biological role, transfers the 4'-phosphopantetheine moiety from coenzyme A to a Ser of acyl-carrier-protein. The polypeptide is Holo-[acyl-carrier-protein] synthase (Herminiimonas arsenicoxydans).